The sequence spans 170 residues: ATP synthase subunit b (170 aa).

The chain crosses the membrane as a helical span at residues 22–41; the sequence is ILNWAVVVFGLYKFLPGFLG. A disordered region spans residues 72–98; it reads AKKDLSSAEEKASQIKADSLKRSESIR.

This sequence belongs to the ATPase B chain family. F-type ATPases have 2 components, F(1) - the catalytic core - and F(0) - the membrane proton channel. F(1) has five subunits: alpha(3), beta(3), gamma(1), delta(1), epsilon(1). F(0) has four main subunits: a(1), b(1), b'(1) and c(10-14). The alpha and beta chains form an alternating ring which encloses part of the gamma chain. F(1) is attached to F(0) by a central stalk formed by the gamma and epsilon chains, while a peripheral stalk is formed by the delta, b and b' chains.

The protein resides in the cellular thylakoid membrane. F(1)F(0) ATP synthase produces ATP from ADP in the presence of a proton or sodium gradient. F-type ATPases consist of two structural domains, F(1) containing the extramembraneous catalytic core and F(0) containing the membrane proton channel, linked together by a central stalk and a peripheral stalk. During catalysis, ATP synthesis in the catalytic domain of F(1) is coupled via a rotary mechanism of the central stalk subunits to proton translocation. In terms of biological role, component of the F(0) channel, it forms part of the peripheral stalk, linking F(1) to F(0). The polypeptide is ATP synthase subunit b (Prochlorococcus marinus (strain MIT 9301)).